The following is a 533-amino-acid chain: Ribonuclease Y (533 aa).

The disordered stretch occupies residues 16–41 (VERIRRRAEQDAAEQTERVRREAEQI). Residues 22–41 (RAEQDAAEQTERVRREAEQI) are compositionally biased toward basic and acidic residues. A KH domain is found at 223–289 (VVSVLHLPSD…RITLTALVSD (67 aa)). In terms of domain architecture, HD spans 349-442 (VLAHLVESAH…TQAADQISGG (94 aa)).

The protein belongs to the RNase Y family.

Functionally, endoribonuclease that initiates mRNA decay. This Parafrankia sp. (strain EAN1pec) protein is Ribonuclease Y.